Here is a 101-residue protein sequence, read N- to C-terminus: NADH-quinone oxidoreductase subunit K (101 aa).

Helical transmembrane passes span 4 to 24 (LSHY…GIFI), 29 to 49 (IIVI…NLVA), and 65 to 85 (FVLT…VVFF).

Belongs to the complex I subunit 4L family. In terms of assembly, NDH-1 is composed of 14 different subunits. Subunits NuoA, H, J, K, L, M, N constitute the membrane sector of the complex.

The protein localises to the cell inner membrane. The catalysed reaction is a quinone + NADH + 5 H(+)(in) = a quinol + NAD(+) + 4 H(+)(out). Its function is as follows. NDH-1 shuttles electrons from NADH, via FMN and iron-sulfur (Fe-S) centers, to quinones in the respiratory chain. The immediate electron acceptor for the enzyme in this species is believed to be ubiquinone. Couples the redox reaction to proton translocation (for every two electrons transferred, four hydrogen ions are translocated across the cytoplasmic membrane), and thus conserves the redox energy in a proton gradient. The protein is NADH-quinone oxidoreductase subunit K of Methylobacterium nodulans (strain LMG 21967 / CNCM I-2342 / ORS 2060).